Reading from the N-terminus, the 338-residue chain is UDP-glucose 4-epimerase (338 aa).

NAD(+) is bound by residues 11–12, 31–36, 58–59, 80–84, Asn-99, Ser-124, Tyr-149, Lys-153, and Phe-178; these read YI, DNLCNS, DI, and FAGLK. Substrate contacts are provided by Ser-124 and Tyr-149. Tyr-149 (proton acceptor) is an active-site residue. Residues Asn-179, 199–200, 216–218, Arg-231, 292–295, and Tyr-299 each bind substrate; these read NL, AIF, and REGD.

This sequence belongs to the NAD(P)-dependent epimerase/dehydratase family. As to quaternary structure, homodimer. The cofactor is NAD(+).

It carries out the reaction UDP-alpha-D-glucose = UDP-alpha-D-galactose. It participates in carbohydrate metabolism; galactose metabolism. In terms of biological role, involved in the metabolism of galactose. Catalyzes the conversion of UDP-galactose (UDP-Gal) to UDP-glucose (UDP-Glc) through a mechanism involving the transient reduction of NAD. The polypeptide is UDP-glucose 4-epimerase (galE) (Yersinia pestis).